Consider the following 169-residue polypeptide: Crossover junction endodeoxyribonuclease RuvC (169 aa).

Active-site residues include Asp7, Glu67, and Asp140. Residues Asp7, Glu67, and Asp140 each coordinate Mg(2+).

The protein belongs to the RuvC family. As to quaternary structure, homodimer which binds Holliday junction (HJ) DNA. The HJ becomes 2-fold symmetrical on binding to RuvC with unstacked arms; it has a different conformation from HJ DNA in complex with RuvA. In the full resolvosome a probable DNA-RuvA(4)-RuvB(12)-RuvC(2) complex forms which resolves the HJ. It depends on Mg(2+) as a cofactor.

The protein localises to the cytoplasm. The catalysed reaction is Endonucleolytic cleavage at a junction such as a reciprocal single-stranded crossover between two homologous DNA duplexes (Holliday junction).. The RuvA-RuvB-RuvC complex processes Holliday junction (HJ) DNA during genetic recombination and DNA repair. Endonuclease that resolves HJ intermediates. Cleaves cruciform DNA by making single-stranded nicks across the HJ at symmetrical positions within the homologous arms, yielding a 5'-phosphate and a 3'-hydroxyl group; requires a central core of homology in the junction. The consensus cleavage sequence is 5'-(A/T)TT(C/G)-3'. Cleavage occurs on the 3'-side of the TT dinucleotide at the point of strand exchange. HJ branch migration catalyzed by RuvA-RuvB allows RuvC to scan DNA until it finds its consensus sequence, where it cleaves and resolves the cruciform DNA. The chain is Crossover junction endodeoxyribonuclease RuvC from Clostridioides difficile (strain 630) (Peptoclostridium difficile).